Here is a 330-residue protein sequence, read N- to C-terminus: D-alanine--D-alanine ligase (330 aa).

Positions 120 to 326 constitute an ATP-grasp domain; that stretch reads KLWYDALGIP…FKTFLQKAVL (207 aa). Residue 150–205 participates in ATP binding; sequence AFKQWGGLFVKAACQGSSVGCYKVTSEEELAQAINGAFGYSQQVLVEKAVKPRELE. Aspartate 280, glutamate 293, and asparagine 295 together coordinate Mg(2+).

It belongs to the D-alanine--D-alanine ligase family. Requires Mg(2+) as cofactor. Mn(2+) is required as a cofactor.

The protein resides in the cytoplasm. It carries out the reaction 2 D-alanine + ATP = D-alanyl-D-alanine + ADP + phosphate + H(+). Its pathway is cell wall biogenesis; peptidoglycan biosynthesis. Functionally, cell wall formation. The sequence is that of D-alanine--D-alanine ligase from Aliivibrio fischeri (strain MJ11) (Vibrio fischeri).